Here is a 1522-residue protein sequence, read N- to C-terminus: Myosin-15 (1522 aa).

Positions 12–61 (RKGDKVWVEDKDLAWIAADVLDSFDNKLHVETSTGKKVFVSPEKLFRRDP) constitute a Myosin N-terminal SH3-like domain. The Myosin motor domain occupies 67–737 (NGVDDMTKLT…QIGILDSRRA (671 aa)). Residues 161–168 (GESGAGKT) and 214–222 (NDNSSRFGK) contribute to the ATP site. Actin-binding regions lie at residues 499–533 (LIEK…FQNF), 535–558 (FHPR…AGKV), 593–618 (FPSA…KQQL), and 618–640 (LQAL…KPNS). 5 consecutive IQ domains span residues 763–792 (ARAS…AAAA), 788–817 (NAAA…AAIV), 811–840 (LVSA…HRAA), 836–865 (EHRA…SIIA), and 859–888 (RQSS…VANE). Residues 889 to 1059 (AGALRLAKTK…NQVLMQKTLI (171 aa)) adopt a coiled-coil conformation. The Dilute domain maps to 1164–1456 (NIIIEGINEA…VSQMRVLVDK (293 aa)).

The protein belongs to the TRAFAC class myosin-kinesin ATPase superfamily. Myosin family. Plant myosin class XI subfamily. Homodimer. Interacts with MYOB1 and MYOB7. Interacts with WIT1 and WIT2. Core component of the LINC complex which is composed of inner nuclear membrane SUN domain-containing proteins coupled to outer nuclear membrane WIP and WIT proteins. The LINC complex also involves nucleoskeletal proteins CRWN/LINC and possibly KAKU4 and the cytoskeletal myosin KAKU1.

Its subcellular location is the cytoplasm. The protein resides in the nucleus membrane. Myosin heavy chain that is required for the cell cycle-regulated transport of various organelles and proteins for their segregation. Functions by binding with its tail domain to receptor proteins on organelles and exerting force with its N-terminal motor domain against actin filaments, thereby transporting its cargo along polarized actin cables. Involved in trafficking of Golgi stacks and mitochondria. Plays a role in nuclear shape determination. Drives nuclear movement along actin filaments. As component of the SUN-WIP-WIT2-KAKU1 complex, mediates the transfer of cytoplasmic forces to the nuclear envelope (NE), leading to nuclear shape changes. This Arabidopsis thaliana (Mouse-ear cress) protein is Myosin-15 (XI-I).